A 479-amino-acid polypeptide reads, in one-letter code: Anaerobic nitric oxide reductase flavorubredoxin (479 aa).

The zinc metallo-hydrolase stretch occupies residues 30–210 (LRGSSYNSYL…PFSRLVTPKI (181 aa)). 6 residues coordinate Fe cation: His79, Glu81, Asp83, His147, Asp166, and His227. Residues 254–393 (ITIFYDTMSN…LCRQHGRDIA (140 aa)) form the Flavodoxin-like domain. FMN contacts are provided by residues 260 to 264 (TMSNN) and 342 to 369 (AFGS…EMSL). Residues 423–474 (GPKMQCSVCQWIYDPALGEPLQDVAPGTPWSDVPDNFLCPECSLGKDVFDVL) enclose the Rubredoxin-like domain. Positions 428, 431, 461, and 464 each coordinate Fe cation.

It in the N-terminal section; belongs to the zinc metallo-hydrolase group 3 family. In terms of assembly, homotetramer. The cofactor is Fe cation. It depends on FMN as a cofactor.

The protein resides in the cytoplasm. It participates in nitrogen metabolism; nitric oxide reduction. Anaerobic nitric oxide reductase; uses NADH to detoxify nitric oxide (NO), protecting several 4Fe-4S NO-sensitive enzymes. Has at least 2 reductase partners, only one of which (NorW, flavorubredoxin reductase) has been identified. NO probably binds to the di-iron center; electrons enter from the NorW at rubredoxin and are transferred sequentially to the FMN center and the di-iron center. Also able to function as an aerobic oxygen reductase. This chain is Anaerobic nitric oxide reductase flavorubredoxin, found in Salmonella arizonae (strain ATCC BAA-731 / CDC346-86 / RSK2980).